Reading from the N-terminus, the 410-residue chain is Metacaspase-1B (410 aa).

The tract at residues 1–106 (MYHRNSAPPP…SFGKGAPSNY (106 aa)) is disordered. Composition is skewed to pro residues over residues 7–23 (APPP…PQSQ) and 32–52 (PPYP…PPPT). Active-site residues include His-201 and Cys-257.

It belongs to the peptidase C14B family.

Involved in cell death (apoptosis). The polypeptide is Metacaspase-1B (casB) (Aspergillus clavatus (strain ATCC 1007 / CBS 513.65 / DSM 816 / NCTC 3887 / NRRL 1 / QM 1276 / 107)).